The chain runs to 691 residues: Elongation factor G (691 aa).

Residues 8–282 (EKTRNIGIMA…AVVDYLPSPV (275 aa)) form the tr-type G domain. Residues 17–24 (AHIDAGKT), 81–85 (DTPGH), and 135–138 (NKMD) each bind GTP.

It belongs to the TRAFAC class translation factor GTPase superfamily. Classic translation factor GTPase family. EF-G/EF-2 subfamily.

It localises to the cytoplasm. In terms of biological role, catalyzes the GTP-dependent ribosomal translocation step during translation elongation. During this step, the ribosome changes from the pre-translocational (PRE) to the post-translocational (POST) state as the newly formed A-site-bound peptidyl-tRNA and P-site-bound deacylated tRNA move to the P and E sites, respectively. Catalyzes the coordinated movement of the two tRNA molecules, the mRNA and conformational changes in the ribosome. The protein is Elongation factor G of Caldicellulosiruptor saccharolyticus (strain ATCC 43494 / DSM 8903 / Tp8T 6331).